A 461-amino-acid chain; its full sequence is Anthranilate synthase component 1 (461 aa).

L-tryptophan contacts are provided by residues Ser-43 and 238–240 (PYM). 273-274 (GT) contributes to the chorismate binding site. Glu-300 contributes to the Mg(2+) binding site. Residues Tyr-388, Arg-408, 422 to 424 (GAG), and Gly-424 contribute to the chorismate site. Glu-437 serves as a coordination point for Mg(2+).

Belongs to the anthranilate synthase component I family. As to quaternary structure, heterotetramer consisting of two non-identical subunits: a beta subunit (TrpG) and a large alpha subunit (TrpE). Requires Mg(2+) as cofactor.

It carries out the reaction chorismate + L-glutamine = anthranilate + pyruvate + L-glutamate + H(+). It functions in the pathway amino-acid biosynthesis; L-tryptophan biosynthesis; L-tryptophan from chorismate: step 1/5. Its activity is regulated as follows. Feedback inhibited by tryptophan. Part of a heterotetrameric complex that catalyzes the two-step biosynthesis of anthranilate, an intermediate in the biosynthesis of L-tryptophan. In the first step, the glutamine-binding beta subunit (TrpG) of anthranilate synthase (AS) provides the glutamine amidotransferase activity which generates ammonia as a substrate that, along with chorismate, is used in the second step, catalyzed by the large alpha subunit of AS (TrpE) to produce anthranilate. In the absence of TrpG, TrpE can synthesize anthranilate directly from chorismate and high concentrations of ammonia. The protein is Anthranilate synthase component 1 (trpE) of Methanothermobacter marburgensis (strain ATCC BAA-927 / DSM 2133 / JCM 14651 / NBRC 100331 / OCM 82 / Marburg) (Methanobacterium thermoautotrophicum).